A 289-amino-acid chain; its full sequence is MKLLVKAPAKINLSLDVLGKRQDGYHEVKMIMTTIDLADRLELTELAEDRIEILSHNRYVPDDQRNLAYQAAKLLKVKFNVKKGVSITIEKTIPVAAGLAGGSSDAAATLRGLNKLWNLGLTIDELAKLGAEIGSDVSFCVYGGTAIATGRGEEIEHIKTPPSCWVVLAKPHIGVSTADVYGNLKLNRVTHPNVDKMVEVINHGDYKGICDTVGNVLEDVTFAMHPEVARIKSQMKRFGADAVLMSGSGPTVFGLVHHDSRMHRIYNGLKGFCEQVYAVRLLGERETLE.

The active site involves Lys-10. An ATP-binding site is contributed by 94 to 104 (PVAAGLAGGSS). The active site involves Asp-136.

The protein belongs to the GHMP kinase family. IspE subfamily.

The catalysed reaction is 4-CDP-2-C-methyl-D-erythritol + ATP = 4-CDP-2-C-methyl-D-erythritol 2-phosphate + ADP + H(+). Its pathway is isoprenoid biosynthesis; isopentenyl diphosphate biosynthesis via DXP pathway; isopentenyl diphosphate from 1-deoxy-D-xylulose 5-phosphate: step 3/6. In terms of biological role, catalyzes the phosphorylation of the position 2 hydroxy group of 4-diphosphocytidyl-2C-methyl-D-erythritol. This chain is 4-diphosphocytidyl-2-C-methyl-D-erythritol kinase, found in Bacillus mycoides (strain KBAB4) (Bacillus weihenstephanensis).